A 370-amino-acid chain; its full sequence is Lysophosphatidic acid receptor 4 (370 aa).

Topologically, residues 1-43 (MGDRRFIDFQFQDSNSSLRPRLGNATANNTCIVDDSFKYNLNG) are extracellular. Residues Asn15, Asn24, and Asn28 are each glycosylated (N-linked (GlcNAc...) asparagine). Residues 44–64 (AVYSVVFILGLITNSVSLFVF) traverse the membrane as a helical segment. Over 65–73 (CFRMKMRSE) the chain is Cytoplasmic. A helical membrane pass occupies residues 74–94 (TAIFITNLAVSDLLFVCTLPF). Residues 95 to 112 (KIFYNFNRHWPFGDTLCK) lie on the Extracellular side of the membrane. The cysteines at positions 111 and 188 are disulfide-linked. The chain crosses the membrane as a helical span at residues 113-133 (ISGTAFLTNIYGSMLFLTCIS). Topologically, residues 134–155 (VDRFLAIVYPFRSRTIRTRRNS) are cytoplasmic. Residues 156–176 (AIVCAGVWILVLSGGISASLF) form a helical membrane-spanning segment. Residues 177–203 (STTNVNNATTTCFEGFSKRVWKTYLSK) lie on the Extracellular side of the membrane. N-linked (GlcNAc...) asparagine glycosylation is present at Asn183. The helical transmembrane segment at 204–224 (ITIFIEVVGFIIPLILNVSCS) threads the bilayer. Over 225–254 (SVVLRTLRKPATLSQIGTNKKKVLKMITVH) the chain is Cytoplasmic. The helical transmembrane segment at 255–275 (MAVFVVCFVPYNSVLFLYALV) threads the bilayer. Over 276–294 (RSQAITNCFLERFAKIMYP) the chain is Extracellular. Residues 295–315 (ITLCLATLNCCFDPFIYYFTL) traverse the membrane as a helical segment. At 316-370 (ESFQKSFYINAHIRMESLFKTETPLTTKPSLPAIQEEVSDQTTNNGGELMLESTF) the chain is on the cytoplasmic side.

It belongs to the G-protein coupled receptor 1 family. In terms of tissue distribution, high expression in ovary. Not detected in the brain regions thalamus, putamen, caudate, frontal cortex, pons, hypothalamus and hippocampus.

It localises to the cell membrane. In terms of biological role, receptor for lysophosphatidic acid (LPA), a mediator of diverse cellular activities. Transduces a signal by increasing the intracellular calcium ions and by stimulating adenylyl cyclase activity. The rank order of potency for agonists of this receptor is 1-oleoyl- &gt; 1-stearoyl- &gt; 1-palmitoyl- &gt; 1-myristoyl- &gt; 1-alkyl- &gt; 1-alkenyl-LPA. In Homo sapiens (Human), this protein is Lysophosphatidic acid receptor 4 (LPAR4).